We begin with the raw amino-acid sequence, 617 residues long: Ceramide transfer protein (617 aa).

A compositionally biased stretch (polar residues) spans Met1–Gly11. Positions Met1–Pro23 are disordered. The PH domain occupies Pro23–Ser117. The stretch at Arg268–His302 forms a coiled coil. Residues Glu320–Glu326 carry the FFAT motif. A compositionally biased stretch (basic and acidic residues) spans Gln332 to Arg344. The segment at Gln332–Glu355 is disordered. Residues Asp383 to Ala611 enclose the START domain. Positions 466, 487, 524, and 572 each coordinate an N-acylsphing-4-enine.

It localises to the cytoplasm. It is found in the golgi apparatus. The protein resides in the endoplasmic reticulum. It carries out the reaction N-hexadecanoylsphing-4-enine(in) = N-hexadecanoylsphing-4-enine(out). Its function is as follows. May mediate the intracellular trafficking of ceramide in a non-vesicular manner. The sequence is that of Ceramide transfer protein (cert1) from Xenopus tropicalis (Western clawed frog).